The sequence spans 261 residues: MHKKIARWVQDKKSGIKRAVVTAYDYPFARLAAEAGVHGILVGDSLGMVVGGGSDTLGVTLEQMAYHTGMVVRGAGDCLVFADLPFGSYEKGPEQAWAAAVTLLRAGADVVKLEGGAEMASTVAFCTERGINICAHIGLTPQRVRQWGSFQRQGTDADSARRLQADAGALAEAGARFLVLEAVPDALAANITRDIAIPTIGIGAGPDTDAQVLVIHDLLGLGTESPPFARRYIEGGRIMRDALAEYVREVGNSEFPPRRKR.

Aspartate 44 and aspartate 83 together coordinate Mg(2+). Residues 44–45 (DS), aspartate 83, and lysine 112 each bind 3-methyl-2-oxobutanoate. Glutamate 114 contributes to the Mg(2+) binding site. The Proton acceptor role is filled by glutamate 181.

Belongs to the PanB family. In terms of assembly, homodecamer; pentamer of dimers. Requires Mg(2+) as cofactor.

It is found in the cytoplasm. It catalyses the reaction 3-methyl-2-oxobutanoate + (6R)-5,10-methylene-5,6,7,8-tetrahydrofolate + H2O = 2-dehydropantoate + (6S)-5,6,7,8-tetrahydrofolate. It participates in cofactor biosynthesis; (R)-pantothenate biosynthesis; (R)-pantoate from 3-methyl-2-oxobutanoate: step 1/2. Its function is as follows. Catalyzes the reversible reaction in which hydroxymethyl group from 5,10-methylenetetrahydrofolate is transferred onto alpha-ketoisovalerate to form ketopantoate. The protein is 3-methyl-2-oxobutanoate hydroxymethyltransferase of Acidithiobacillus ferrooxidans (strain ATCC 23270 / DSM 14882 / CIP 104768 / NCIMB 8455) (Ferrobacillus ferrooxidans (strain ATCC 23270)).